The primary structure comprises 87 residues: UPF0250 protein plu1293 (87 aa).

Belongs to the UPF0250 family.

The sequence is that of UPF0250 protein plu1293 from Photorhabdus laumondii subsp. laumondii (strain DSM 15139 / CIP 105565 / TT01) (Photorhabdus luminescens subsp. laumondii).